The sequence spans 100 residues: Small ribosomal subunit protein bS20 (100 aa).

A compositionally biased stretch (basic residues) spans 1-22 (MASGKPKKKNPRLASGRKRARQ). The segment at 1-26 (MASGKPKKKNPRLASGRKRARQGLKL) is disordered.

Belongs to the bacterial ribosomal protein bS20 family.

Functionally, binds directly to 16S ribosomal RNA. The polypeptide is Small ribosomal subunit protein bS20 (Acidovorax ebreus (strain TPSY) (Diaphorobacter sp. (strain TPSY))).